Here is a 166-residue protein sequence, read N- to C-terminus: PTS system glucose-specific EIIA component (166 aa).

Residues 34–138 form the PTS EIIA type-1 domain; sequence DPVFAQKMMG…SIISPIIITN (105 aa). Residues H71 and H86 each coordinate Zn(2+). H86 serves as the catalytic Tele-phosphohistidine intermediate; for EIIA activity. A Phosphohistidine; by HPr modification is found at H86.

In terms of assembly, heterodimer with glycerol kinase (glpk). It depends on Zn(2+) as a cofactor.

The protein localises to the cytoplasm. Functionally, the phosphoenolpyruvate-dependent sugar phosphotransferase system (sugar PTS), a major carbohydrate active transport system, catalyzes the phosphorylation of incoming sugar substrates concomitantly with their translocation across the cell membrane. The enzyme II complex composed of PtsG and Crr is involved in glucose transport. The polypeptide is PTS system glucose-specific EIIA component (crr) (Staphylococcus epidermidis (strain ATCC 35984 / DSM 28319 / BCRC 17069 / CCUG 31568 / BM 3577 / RP62A)).